A 201-amino-acid polypeptide reads, in one-letter code: Protein MJ0810 (201 aa).

Positions 7-197 (EEGTFAVRYA…EVEPRGEVIE (191 aa)) constitute an AMMECR1 domain.

This Methanocaldococcus jannaschii (strain ATCC 43067 / DSM 2661 / JAL-1 / JCM 10045 / NBRC 100440) (Methanococcus jannaschii) protein is Protein MJ0810.